Consider the following 328-residue polypeptide: Ribosomal RNA large subunit methyltransferase F (328 aa).

The disordered stretch occupies residues 1–31; that stretch reads MTDTRKPPRKKPQRPAKPAAPREKATLHPRN.

The protein belongs to the methyltransferase superfamily. METTL16/RlmF family.

Its subcellular location is the cytoplasm. The catalysed reaction is adenosine(1618) in 23S rRNA + S-adenosyl-L-methionine = N(6)-methyladenosine(1618) in 23S rRNA + S-adenosyl-L-homocysteine + H(+). Its function is as follows. Specifically methylates the adenine in position 1618 of 23S rRNA. In Pseudomonas savastanoi pv. phaseolicola (strain 1448A / Race 6) (Pseudomonas syringae pv. phaseolicola (strain 1448A / Race 6)), this protein is Ribosomal RNA large subunit methyltransferase F.